The primary structure comprises 519 residues: MQPIQRALISVSDKTGLLDFARVLAARGVEILSTGGTARLLADNGLTVVEVSDHTGFPEMMDGRVKTLHPRIHGGILGRRGLDDAVMTEHGIPPIDLVVVNLYPFEQTVANPDCDLETAIENIDIGGPTLLRAAAKNHASVTVVVDAADYERVAEEIQSSGGVSEATRFDLAAKVFEHTARYDGAIANYLSARAESEAGASFPRTLTLQFKRRQSMRYGENPHQNAAFYVEHQVAEAGISTATQIQGKELSYNNIADTDAALECVKQFDEAPACVIVKHANPCGVAFGATLLEAYDRAYQTDPESAFGGIIAFNRELDAETAHAIVERQFVEVIIAPRVSDAARAAVASKPNVRLLECGDWSREPGDRLDFKRVNGGLLVQDADLRLTDQIRTVTERTPTEAELADLLFTWRVAKFVKSNAIVYGRERMTIGVGAGQMSRVNSARIAAIKAEHAGLTVAGSVMASDAFFPFRDGIDQAAAAGIKAVIQPGGSMRDAEVIAAANEHGMAMVFTGMRHFRH.

The region spanning Met-1–Val-145 is the MGS-like domain.

This sequence belongs to the PurH family.

The enzyme catalyses (6R)-10-formyltetrahydrofolate + 5-amino-1-(5-phospho-beta-D-ribosyl)imidazole-4-carboxamide = 5-formamido-1-(5-phospho-D-ribosyl)imidazole-4-carboxamide + (6S)-5,6,7,8-tetrahydrofolate. It catalyses the reaction IMP + H2O = 5-formamido-1-(5-phospho-D-ribosyl)imidazole-4-carboxamide. It functions in the pathway purine metabolism; IMP biosynthesis via de novo pathway; 5-formamido-1-(5-phospho-D-ribosyl)imidazole-4-carboxamide from 5-amino-1-(5-phospho-D-ribosyl)imidazole-4-carboxamide (10-formyl THF route): step 1/1. Its pathway is purine metabolism; IMP biosynthesis via de novo pathway; IMP from 5-formamido-1-(5-phospho-D-ribosyl)imidazole-4-carboxamide: step 1/1. This Allochromatium vinosum (strain ATCC 17899 / DSM 180 / NBRC 103801 / NCIMB 10441 / D) (Chromatium vinosum) protein is Bifunctional purine biosynthesis protein PurH.